The chain runs to 282 residues: 4-hydroxy-tetrahydrodipicolinate reductase (282 aa).

12-17 (GVTGRM) contributes to the NAD(+) binding site. Residue arginine 44 participates in NADP(+) binding. NAD(+)-binding positions include 107–109 (GTT) and 131–134 (SSNF). The Proton donor/acceptor role is filled by histidine 164. A (S)-2,3,4,5-tetrahydrodipicolinate-binding site is contributed by histidine 165. The active-site Proton donor is the lysine 168. Residue 174-175 (GT) coordinates (S)-2,3,4,5-tetrahydrodipicolinate.

The protein belongs to the DapB family. As to quaternary structure, homotetramer.

The protein resides in the cytoplasm. The enzyme catalyses (S)-2,3,4,5-tetrahydrodipicolinate + NAD(+) + H2O = (2S,4S)-4-hydroxy-2,3,4,5-tetrahydrodipicolinate + NADH + H(+). It catalyses the reaction (S)-2,3,4,5-tetrahydrodipicolinate + NADP(+) + H2O = (2S,4S)-4-hydroxy-2,3,4,5-tetrahydrodipicolinate + NADPH + H(+). Its pathway is amino-acid biosynthesis; L-lysine biosynthesis via DAP pathway; (S)-tetrahydrodipicolinate from L-aspartate: step 4/4. Catalyzes the conversion of 4-hydroxy-tetrahydrodipicolinate (HTPA) to tetrahydrodipicolinate. In Blochmanniella pennsylvanica (strain BPEN), this protein is 4-hydroxy-tetrahydrodipicolinate reductase.